The chain runs to 80 residues: RNA-binding protein Hfq (80 aa).

The Sm domain maps to 10–70; that stretch reads DLFLNTVRKQ…ISTIMPGQPM (61 aa).

The protein belongs to the Hfq family. Homohexamer.

In terms of biological role, RNA chaperone that binds small regulatory RNA (sRNAs) and mRNAs to facilitate mRNA translational regulation in response to envelope stress, environmental stress and changes in metabolite concentrations. Also binds with high specificity to tRNAs. The chain is RNA-binding protein Hfq from Agrobacterium fabrum (strain C58 / ATCC 33970) (Agrobacterium tumefaciens (strain C58)).